Here is a 1139-residue protein sequence, read N- to C-terminus: Retinoblastoma-like protein 2 (1139 aa).

The segment at 1–45 (MPSGGDQSPPPPPPPPAAAASDEEEEDDGEAEDAAPPAESPTPQI) is disordered. A compositionally biased stretch (pro residues) spans 8–17 (SPPPPPPPPA). Residues 21–33 (SDEEEEDDGEAED) are compositionally biased toward acidic residues. Position 413 is a phosphoserine (Ser413). Position 417 is a phosphothreonine (Thr417). The tract at residues 417 to 616 (TPVSTATHSL…EKIRDNENRV (200 aa)) is domain A. Residues 417–1024 (TPVSTATHSL…KQIKTFAMKY (608 aa)) form a pocket; binds E1A region. A glycan (O-linked (GlcNAc) serine) is linked at Ser420. Positions 617–827 (PTCEEVMPPQ…KQGQSVTSSS (211 aa)) are spacer. Ser639 bears the Phosphoserine mark. Position 642 is a phosphothreonine (Thr642). Residues 654-678 (GGLGRSITSPTTLYDRYSSPPASTT) form a disordered region. Phosphoserine is present on residues Ser662, Ser672, and Ser688. Over residues 810 to 827 (ISPGGQQQKQGQSVTSSS) the composition is skewed to low complexity. 2 disordered regions span residues 810 to 831 (ISPG…NRPR) and 933 to 999 (KGKR…DMEE). The tract at residues 828–1024 (NRPRKTSSLS…KQIKTFAMKY (197 aa)) is domain B. A compositionally biased stretch (polar residues) spans 941–955 (SGSSDSRSHQNSPTE). Residues Ser948, Ser952, Ser966, Ser971, Ser972, and Ser973 each carry the phosphoserine modification. Positions 964–973 (DSSPVMRSSS) are enriched in low complexity. At Thr974 the chain carries Phosphothreonine. Pro residues predominate over residues 977 to 987 (VPQPSSAPPTP). 2 positions are modified to phosphoserine: Ser981 and Ser982. Thr986 carries the post-translational modification Phosphothreonine. A phosphoserine mark is found at Ser1035, Ser1068, Ser1080, and Ser1112.

It belongs to the retinoblastoma protein (RB) family. In terms of assembly, interacts with AATF. Interacts with KMT5B, KMT5C and USP4. Component of the DREAM complex (also named LINC complex) at least composed of E2F4, E2F5, LIN9, LIN37, LIN52, LIN54, MYBL1, MYBL2, RBL1, RBL2, RBBP4, TFDP1 and TFDP2. The complex exists in quiescent cells where it represses cell cycle-dependent genes. It dissociates in S phase when LIN9, LIN37, LIN52 and LIN54 form a subcomplex that binds to MYBL2. Interacts with RINT1. Interacts with PML (isoform PML-1, isoform PML-2, isoform PML-3, isoform PML-4 and isoform PML-5). Interacts with RBBP9. Interacts with CD53. As to quaternary structure, (Microbial infection) Interacts with JC virus small t antigen. In terms of processing, during G0 and early G1 phase of the cell cycle, phosphorylated on Ser-639 and on 5 sites within the domain B. Phosphorylation on Ser-672 in G1 leads to its ubiquitin-dependent proteolysis.

It is found in the nucleus. Functionally, key regulator of entry into cell division. Directly involved in heterochromatin formation by maintaining overall chromatin structure and, in particular, that of constitutive heterochromatin by stabilizing histone methylation. Recruits and targets histone methyltransferases KMT5B and KMT5C, leading to epigenetic transcriptional repression. Controls histone H4 'Lys-20' trimethylation. Probably acts as a transcription repressor by recruiting chromatin-modifying enzymes to promoters. Potent inhibitor of E2F-mediated trans-activation, associates preferentially with E2F5. Binds to cyclins A and E. Binds to and may be involved in the transforming capacity of the adenovirus E1A protein. May act as a tumor suppressor. This chain is Retinoblastoma-like protein 2 (RBL2), found in Homo sapiens (Human).